A 1058-amino-acid polypeptide reads, in one-letter code: Carbamoyl phosphate synthase pyrimidine-specific large chain (1058 aa).

The carboxyphosphate synthetic domain stretch occupies residues 1-401 (MPKRTDIHKI…ATLKAVRSLE (401 aa)). ATP-binding residues include arginine 129, arginine 169, glycine 175, glycine 176, glutamine 208, isoleucine 210, glutamate 215, glycine 241, isoleucine 242, histidine 243, glutamine 284, and glutamate 298. Residues 133-327 (KALMEELGEP…IAKMAAKIAV (195 aa)) enclose the ATP-grasp 1 domain. Mg(2+) contacts are provided by glutamine 284, glutamate 298, and asparagine 300. Mn(2+) is bound by residues glutamine 284, glutamate 298, and asparagine 300. The interval 402–546 (IGVHHVEEPA…YGTYEFENES (145 aa)) is oligomerization domain. A carbamoyl phosphate synthetic domain region spans residues 547–929 (IVTKRPSVLV…ALYKAFEAAK (383 aa)). An ATP-grasp 2 domain is found at 671–861 (DKVIKALAIP…MAQVATRAIL (191 aa)). Residues arginine 707, serine 746, leucine 748, glutamate 752, glycine 777, valine 778, histidine 779, serine 780, glutamine 820, and glutamate 832 each coordinate ATP. Residues glutamine 820, glutamate 832, and asparagine 834 each contribute to the Mg(2+) site. Residues glutamine 820, glutamate 832, and asparagine 834 each coordinate Mn(2+). Positions 930–1058 (LHVPSHGNVL…ESQSFVTQAL (129 aa)) constitute an MGS-like domain. An allosteric domain region spans residues 930–1058 (LHVPSHGNVL…ESQSFVTQAL (129 aa)).

This sequence belongs to the CarB family. Composed of two chains; the small (or glutamine) chain promotes the hydrolysis of glutamine to ammonia, which is used by the large (or ammonia) chain to synthesize carbamoyl phosphate. Tetramer of heterodimers (alpha,beta)4. Mg(2+) is required as a cofactor. Requires Mn(2+) as cofactor.

The enzyme catalyses hydrogencarbonate + L-glutamine + 2 ATP + H2O = carbamoyl phosphate + L-glutamate + 2 ADP + phosphate + 2 H(+). The catalysed reaction is hydrogencarbonate + NH4(+) + 2 ATP = carbamoyl phosphate + 2 ADP + phosphate + 2 H(+). It functions in the pathway amino-acid biosynthesis; L-arginine biosynthesis; carbamoyl phosphate from bicarbonate: step 1/1. It participates in pyrimidine metabolism; UMP biosynthesis via de novo pathway; (S)-dihydroorotate from bicarbonate: step 1/3. Functionally, small subunit of the glutamine-dependent carbamoyl phosphate synthetase (CPSase). CPSase catalyzes the formation of carbamoyl phosphate from the ammonia moiety of glutamine, carbonate, and phosphate donated by ATP, constituting the first step of the biosynthetic pathway leading to pyrimidine nucleotides. The large subunit (synthetase) binds the substrates ammonia (free or transferred from glutamine from the small subunit), hydrogencarbonate and ATP and carries out an ATP-coupled ligase reaction, activating hydrogencarbonate by forming carboxy phosphate which reacts with ammonia to form carbamoyl phosphate. This is Carbamoyl phosphate synthase pyrimidine-specific large chain (pyrAB) from Lactiplantibacillus plantarum (strain ATCC BAA-793 / NCIMB 8826 / WCFS1) (Lactobacillus plantarum).